The primary structure comprises 77 residues: METKKISYFLLPSLMIVALIFQPMCSAFTIAEPYIHPCMKGFCSFKSECANKCIFMGHHKGGDCIGGLDGIYCCCLA.

The first 27 residues, 1-27, serve as a signal peptide directing secretion; the sequence is METKKISYFLLPSLMIVALIFQPMCSA. Cystine bridges form between Cys38–Cys75, Cys43–Cys64, Cys49–Cys73, and Cys53–Cys74.

The protein belongs to the DEFL family.

The protein resides in the secreted. The sequence is that of Defensin-like protein 91 (LCR47) from Arabidopsis thaliana (Mouse-ear cress).